A 58-amino-acid polypeptide reads, in one-letter code: Small ribosomal subunit protein eS30 (58 aa).

The disordered stretch occupies residues 1 to 58 (MGKVHGSLARAGKVKNQTPKVPKLDKKKRLTGRAKKRQLYNRRFSDNGGRKKGPNSKA). The segment covering 25 to 40 (DKKKRLTGRAKKRQLY) has biased composition (basic residues).

This sequence belongs to the eukaryotic ribosomal protein eS30 family. As to quaternary structure, component of the small ribosomal subunit. Mature ribosomes consist of a small (40S) and a large (60S) subunit. The 40S subunit contains about 32 different proteins and 1 molecule of RNA (18S). The 60S subunit contains about 42 different proteins and 3 molecules of RNA (28S, 5.8S and 5S).

The protein localises to the cytoplasm. Component of the ribosome, a large ribonucleoprotein complex responsible for the synthesis of proteins in the cell. The small ribosomal subunit (SSU) binds messenger RNAs (mRNAs) and translates the encoded message by selecting cognate aminoacyl-transfer RNA (tRNA) molecules. The large subunit (LSU) contains the ribosomal catalytic site termed the peptidyl transferase center (PTC), which catalyzes the formation of peptide bonds, thereby polymerizing the amino acids delivered by tRNAs into a polypeptide chain. The nascent polypeptides leave the ribosome through a tunnel in the LSU and interact with protein factors that function in enzymatic processing, targeting, and the membrane insertion of nascent chains at the exit of the ribosomal tunnel. The sequence is that of Small ribosomal subunit protein eS30 from Plasmodium falciparum (isolate 3D7).